The chain runs to 425 residues: Peroxisomal membrane protein PEX14 (425 aa).

2 disordered regions span residues 49–89 (RSQG…YRNA) and 247–425 (DEPI…AAQS). Residues 56–76 (SSSVASQVSSYSPSASQSSVA) are compositionally biased toward low complexity. The short motif at 89–97 (APPLPERDW) is the SH3-binding element. The span at 256–297 (PSLTTGANSLTSESSGRSSIPHSQSVPIRTQLTTPPSDSDTS) shows a compositional bias: polar residues. 2 stretches are compositionally biased toward basic and acidic residues: residues 315–324 (DILRKEKNRT) and 333–366 (LGKDLESVAQSDPDKVEKYEGRRDLKSLERPEED).

Belongs to the peroxin-14 family. Interacts with PEX13 (via SH3 domain); forming the PEX13-PEX14 docking complex. Interacts with PEX5 (via WxxxF/Y motifs). Interacts with PEX20 (via WxxxF/Y motifs). Interacts with PEX3, PEX7, PEX8 and PEX17. Phosphorylated on serine or threonine residues.

The protein resides in the peroxisome membrane. Functionally, component of the PEX13-PEX14 docking complex, a translocon channel that specifically mediates the import of peroxisomal cargo proteins bound to PEX5 or PEX20 receptors. The PEX13-PEX14 docking complex forms a large import pore which can be opened to a diameter of about 9 nm. Mechanistically, PEX5 (or PEX20) receptor along with cargo proteins associates with the PEX14 subunit of the PEX13-PEX14 docking complex in the cytosol, leading to the insertion of the receptor into the organelle membrane with the concomitant translocation of the cargo into the peroxisome matrix. This chain is Peroxisomal membrane protein PEX14, found in Komagataella pastoris (Yeast).